The primary structure comprises 561 residues: Lanosterol 14-alpha demethylase (561 aa).

Cysteine 501 provides a ligand contact to heme.

This sequence belongs to the cytochrome P450 family. It depends on heme as a cofactor.

The protein resides in the membrane. It catalyses the reaction a 14alpha-methyl steroid + 3 reduced [NADPH--hemoprotein reductase] + 3 O2 = a Delta(14) steroid + formate + 3 oxidized [NADPH--hemoprotein reductase] + 4 H2O + 4 H(+). The enzyme catalyses a 14alpha-methyl steroid + reduced [NADPH--hemoprotein reductase] + O2 = a 14alpha-hydroxymethyl steroid + oxidized [NADPH--hemoprotein reductase] + H2O + H(+). It carries out the reaction a 14alpha-hydroxymethyl steroid + reduced [NADPH--hemoprotein reductase] + O2 = a 14alpha-formyl steroid + oxidized [NADPH--hemoprotein reductase] + 2 H2O + H(+). The catalysed reaction is a 14alpha-formyl steroid + reduced [NADPH--hemoprotein reductase] + O2 = a Delta(14) steroid + formate + oxidized [NADPH--hemoprotein reductase] + H2O + 2 H(+). It catalyses the reaction lanosterol + 3 reduced [NADPH--hemoprotein reductase] + 3 O2 = 4,4-dimethyl-5alpha-cholesta-8,14,24-trien-3beta-ol + formate + 3 oxidized [NADPH--hemoprotein reductase] + 4 H2O + 4 H(+). The enzyme catalyses lanosterol + reduced [NADPH--hemoprotein reductase] + O2 = 32-hydroxylanosterol + oxidized [NADPH--hemoprotein reductase] + H2O + H(+). It carries out the reaction 32-hydroxylanosterol + reduced [NADPH--hemoprotein reductase] + O2 = 32-oxolanosterol + oxidized [NADPH--hemoprotein reductase] + 2 H2O + H(+). The catalysed reaction is 32-oxolanosterol + reduced [NADPH--hemoprotein reductase] + O2 = 4,4-dimethyl-5alpha-cholesta-8,14,24-trien-3beta-ol + formate + oxidized [NADPH--hemoprotein reductase] + H2O + 2 H(+). It catalyses the reaction eburicol + 3 reduced [NADPH--hemoprotein reductase] + 3 O2 = 14-demethyleburicol + formate + 3 oxidized [NADPH--hemoprotein reductase] + 4 H2O + 4 H(+). The enzyme catalyses eburicol + reduced [NADPH--hemoprotein reductase] + O2 = 32-hydroxyeburicol + oxidized [NADPH--hemoprotein reductase] + H2O + H(+). It carries out the reaction 32-hydroxyeburicol + reduced [NADPH--hemoprotein reductase] + O2 = 32-oxoeburicol + oxidized [NADPH--hemoprotein reductase] + 2 H2O + H(+). The catalysed reaction is 32-oxoeburicol + reduced [NADPH--hemoprotein reductase] + O2 = 14-demethyleburicol + formate + oxidized [NADPH--hemoprotein reductase] + H2O + 2 H(+). The protein operates within steroid biosynthesis; zymosterol biosynthesis; zymosterol from lanosterol: step 1/6. In terms of biological role, sterol 14alpha-demethylase that plays a critical role in the third module of ergosterol biosynthesis pathway, being ergosterol the major sterol component in fungal membranes that participates in a variety of functions. The third module or late pathway involves the ergosterol synthesis itself through consecutive reactions that mainly occur in the endoplasmic reticulum (ER) membrane. In filamentous fungi, during the initial step of this module, lanosterol (lanosta-8,24-dien-3beta-ol) can be metabolized to eburicol. Sterol 14alpha-demethylase catalyzes the three-step oxidative removal of the 14alpha-methyl group (C-32) of both these sterols in the form of formate, and converts eburicol and lanosterol to 14-demethyleburicol (4,4,24-trimethylergosta-8,14,24(28)-trienol) and 4,4-dimethyl-5alpha-cholesta-8,14,24-trien-3beta-ol, respectively, which are further metabolized by other enzymes in the pathway to ergosterol. Can also use substrates not intrinsic to fungi, such as 24,25-dihydrolanosterol (DHL), producing 4,4-dimethyl-8,14-cholestadien-3-beta-ol, but at lower rates than the endogenous substrates. The protein is Lanosterol 14-alpha demethylase (ERG11) of Mycosarcoma maydis (Corn smut fungus).